The chain runs to 474 residues: 3-isopropylmalate dehydratase large subunit (474 aa).

Residues cysteine 355, cysteine 415, and cysteine 418 each contribute to the [4Fe-4S] cluster site.

Belongs to the aconitase/IPM isomerase family. LeuC type 1 subfamily. Heterodimer of LeuC and LeuD. It depends on [4Fe-4S] cluster as a cofactor.

It catalyses the reaction (2R,3S)-3-isopropylmalate = (2S)-2-isopropylmalate. It functions in the pathway amino-acid biosynthesis; L-leucine biosynthesis; L-leucine from 3-methyl-2-oxobutanoate: step 2/4. Catalyzes the isomerization between 2-isopropylmalate and 3-isopropylmalate, via the formation of 2-isopropylmaleate. This Shewanella sp. (strain ANA-3) protein is 3-isopropylmalate dehydratase large subunit.